We begin with the raw amino-acid sequence, 592 residues long: MLALLLTTTIVSGDNQIELTEQLPTVMVAVLVRNKAHTLPYFFSYLEDLDYPKDRMSLWIRSDHNEDRSIEITKAWLKRTSSLYHSVDFKYRSERGKRESEKTSTHWNEERFSDVIRLKQDALQAARMMWADYIFFIDADVFLTNSNTLGKLIERKLPIVAPMLVSDGLYSNFWCGMTSDYYYQRTDDYKKILNYDQIGQWPVPMVHTAVLVSLNIAQTRQLTFERKNLPVGRYDGPVDDIIIFAMSANYSGIPMYVCNELLYGYIMVPLEAGETVPGKDLEQLTNVLSYIVNEYGALSLKQDLSRFVADVPKDKLSLSHIYMINLERRTERRTKMLKHFDLLGLDVEHFPAVDGKQLSDKKVYDMGIRFLPGYADPFHKRPMTMGEIGCFLSHYNIWERMVRLNQQEVLVLEDDIRFEPFFRRRAYGVLADARRIGGWDLIYFGRKRLQEEDEKWIDGSEYLVKAGYSYWTLGYVITLEGAKKLLREQPLSKLLPVDEYLPIMFDNHPNESWTSHFRDRTLSAWSAAPLLLYPTHYTGDEGYISDTEDSLRIQEPKKGDKEQLPNAPALLSESGIGQGEHDLETKNRRSEL.

Positions 1-13 are cleaved as a signal peptide; the sequence is MLALLLTTTIVSG. N-linked (GlcNAc...) asparagine glycosylation is found at Asn-249 and Asn-510. 2 stretches are compositionally biased toward basic and acidic residues: residues 552–563 and 579–592; these read RIQEPKKGDKEQ and GEHD…RSEL. Residues 552 to 592 are disordered; that stretch reads RIQEPKKGDKEQLPNAPALLSESGIGQGEHDLETKNRRSEL. A Prevents secretion from ER motif is present at residues 589 to 592; that stretch reads RSEL.

Belongs to the glycosyltransferase 25 family.

The protein localises to the endoplasmic reticulum lumen. The polypeptide is Glycosyltransferase 25 family member (Anopheles gambiae (African malaria mosquito)).